We begin with the raw amino-acid sequence, 88 residues long: Protein K3 (88 aa).

An S1 motif domain is found at 8–82 (LPNAGDVIKG…TKGYIDVNYK (75 aa)). Binding to host EIF2AK2/PKR regions lie at residues 43-53 (SVKMHMDRYVE) and 74-79 (KGYIDV).

The protein belongs to the poxviridae K3 protein family. In terms of assembly, interacts with host EIF2AK2/PKR kinase.

Functionally, viral mimic of EIF2S1/eIF-2alpha that acts as a pseudosubstrate for EIF2AK2/PKR kinase. Inhibits therefore EIF2S1/eIF-2alpha phosphorylation by host EIF2AK2/PKR kinase and prevents protein synthesis shutoff. Determinant of host species specificity. In Vaccinia virus (strain Western Reserve) (VACV), this protein is Protein K3.